Consider the following 788-residue polypeptide: Putative wall-associated receptor kinase-like 11 (788 aa).

Positions 1 to 27 (MRCDNNYSFSILFSLLLILILDSKVVS) are cleaved as a signal peptide. The Extracellular portion of the chain corresponds to 28 to 375 (LSTSCQSKSV…TFNCIGNKTR (348 aa)). Residues asparagine 65, asparagine 80, asparagine 121, asparagine 159, asparagine 233, asparagine 253, asparagine 278, asparagine 295, and asparagine 310 are each glycosylated (N-linked (GlcNAc...) asparagine). The interval 306–369 (CICNNVTISG…CVNLPGTFNC (64 aa)) is atypical EGF-like. 3 disulfide bridges follow: cysteine 308-cysteine 321, cysteine 343-cysteine 360, and cysteine 354-cysteine 369. The N-linked (GlcNAc...) asparagine glycan is linked to asparagine 372. A helical transmembrane segment spans residues 376–396 (VTMIGVGSAFGILVLVVGIWW). Residues 397–788 (LRKFLKKRRM…QPLFPHPTWI (392 aa)) lie on the Cytoplasmic side of the membrane. The 276-residue stretch at 451 to 726 (FSESRILGQG…KVFTDLEKIL (276 aa)) folds into the Protein kinase domain. Residues 457–465 (LGQGGQGTV) and lysine 479 contribute to the ATP site. Residue tyrosine 524 is modified to Phosphotyrosine. Aspartate 576 functions as the Proton acceptor in the catalytic mechanism. Threonine 610 and threonine 615 each carry phosphothreonine. At tyrosine 623 the chain carries Phosphotyrosine.

It belongs to the protein kinase superfamily. Ser/Thr protein kinase family.

It is found in the membrane. The enzyme catalyses L-seryl-[protein] + ATP = O-phospho-L-seryl-[protein] + ADP + H(+). It carries out the reaction L-threonyl-[protein] + ATP = O-phospho-L-threonyl-[protein] + ADP + H(+). Its function is as follows. Putative serine/threonine-protein kinase that may function as a signaling receptor of extracellular matrix component. This chain is Putative wall-associated receptor kinase-like 11 (WAKL11), found in Arabidopsis thaliana (Mouse-ear cress).